A 407-amino-acid polypeptide reads, in one-letter code: Large ribosomal subunit protein uL3-like (407 aa).

Residues M1 to S31 are compositionally biased toward basic residues. The segment at M1 to P37 is disordered.

It belongs to the universal ribosomal protein uL3 family. As to quaternary structure, component of the large ribosomal subunit (LSU). Part of a LSU subcomplex, the 5S RNP which is composed of the 5S RNA, RPL5 and RPL11. Interacts with NVL in an ATP-dependent manner. Interacts with RRP1B. Interacts with IPO5, IPO7 and KPNB1; these interactions may be involved in RPL5 nuclear import for the assembly of ribosomal subunits. Interacts with RRP1B. In terms of tissue distribution, expression is restricted to striated muscles.

Heart- and skeletal muscle-specific component of the ribosome, which regulates muscle function. Component of the large ribosomal subunit in striated muscle cells: replaces the RPL3 paralog in the ribosome in these cells. The ribosome is a large ribonucleoprotein complex responsible for the synthesis of proteins in the cell. Inhibits myotube growth and muscle function. The polypeptide is Large ribosomal subunit protein uL3-like (Mus musculus (Mouse)).